Reading from the N-terminus, the 172-residue chain is Large ribosomal subunit protein uL10 (172 aa).

The protein belongs to the universal ribosomal protein uL10 family. In terms of assembly, part of the ribosomal stalk of the 50S ribosomal subunit. The N-terminus interacts with L11 and the large rRNA to form the base of the stalk. The C-terminus forms an elongated spine to which L12 dimers bind in a sequential fashion forming a multimeric L10(L12)X complex.

Functionally, forms part of the ribosomal stalk, playing a central role in the interaction of the ribosome with GTP-bound translation factors. The sequence is that of Large ribosomal subunit protein uL10 from Rhizobium rhizogenes (strain K84 / ATCC BAA-868) (Agrobacterium radiobacter).